A 122-amino-acid polypeptide reads, in one-letter code: Short coiled-coil protein (122 aa).

A disordered region spans residues 1–26 (MDGLNTGEEEDSAFTSISLTDDTDHS). Residues 43 to 101 (NADMDAVDAENQVELEEKTRLINQVLELQHTLEDLSARVDAVKEENLKLKSENQVLGQY) are a coiled coil.

The protein belongs to the SCOC family. Homodimer. Interacts with ARL1, ARL2 and ARL3. Directly interacts with FEZ1 and UVRAG. The interaction with UVRAG is reduced by amino acid starvation, but the complex is stabilized in the presence of FEZ1. Interacts with NRBF2.

The protein localises to the golgi apparatus membrane. It is found in the golgi apparatus. It localises to the trans-Golgi network. Its subcellular location is the cytoplasm. The protein resides in the cytosol. Its function is as follows. Positive regulator of amino acid starvation-induced autophagy. This chain is Short coiled-coil protein (Scoc), found in Rattus norvegicus (Rat).